A 246-amino-acid polypeptide reads, in one-letter code: Probable transcriptional regulatory protein Teth39_1009 (246 aa).

The segment at Met1 to Lys21 is disordered.

The protein belongs to the TACO1 family.

It is found in the cytoplasm. In Thermoanaerobacter pseudethanolicus (strain ATCC 33223 / 39E) (Clostridium thermohydrosulfuricum), this protein is Probable transcriptional regulatory protein Teth39_1009.